Reading from the N-terminus, the 270-residue chain is Formamidopyrimidine-DNA glycosylase (270 aa).

The Schiff-base intermediate with DNA role is filled by Pro-2. Glu-3 acts as the Proton donor in catalysis. The active-site Proton donor; for beta-elimination activity is the Lys-58. His-91, Arg-110, and Lys-151 together coordinate DNA. Residues 236–270 form an FPG-type zinc finger; sequence FVYGRGGQPCKVCGTTLREIKLGQRASVYCPKCQR. Arg-260 functions as the Proton donor; for delta-elimination activity in the catalytic mechanism.

Belongs to the FPG family. Monomer. Zn(2+) serves as cofactor.

The enzyme catalyses Hydrolysis of DNA containing ring-opened 7-methylguanine residues, releasing 2,6-diamino-4-hydroxy-5-(N-methyl)formamidopyrimidine.. The catalysed reaction is 2'-deoxyribonucleotide-(2'-deoxyribose 5'-phosphate)-2'-deoxyribonucleotide-DNA = a 3'-end 2'-deoxyribonucleotide-(2,3-dehydro-2,3-deoxyribose 5'-phosphate)-DNA + a 5'-end 5'-phospho-2'-deoxyribonucleoside-DNA + H(+). Functionally, involved in base excision repair of DNA damaged by oxidation or by mutagenic agents. Acts as a DNA glycosylase that recognizes and removes damaged bases. Has a preference for oxidized purines, such as 7,8-dihydro-8-oxoguanine (8-oxoG). Has AP (apurinic/apyrimidinic) lyase activity and introduces nicks in the DNA strand. Cleaves the DNA backbone by beta-delta elimination to generate a single-strand break at the site of the removed base with both 3'- and 5'-phosphates. The protein is Formamidopyrimidine-DNA glycosylase of Pseudomonas savastanoi pv. phaseolicola (strain 1448A / Race 6) (Pseudomonas syringae pv. phaseolicola (strain 1448A / Race 6)).